A 266-amino-acid polypeptide reads, in one-letter code: UPF0328 protein ECU05_1610/ECU11_0120 (266 aa).

The protein belongs to the UPF0328 family.

This chain is UPF0328 protein ECU05_1610/ECU11_0120, found in Encephalitozoon cuniculi (strain GB-M1) (Microsporidian parasite).